The primary structure comprises 553 residues: ATP synthase F(1) complex subunit alpha, mitochondrial (553 aa).

A mitochondrion-targeting transit peptide spans M1–L43. Phosphoserine is present on residues S53 and S65. S76 carries the post-translational modification Phosphoserine; alternate. O-linked (GlcNAc) serine; alternate glycosylation occurs at S76. Phosphoserine is present on S106. N6-acetyllysine occurs at positions 123, 126, and 132. A Phosphothreonine modification is found at T134. The residue at position 161 (K161) is an N6-acetyllysine; alternate. An N6-succinyllysine; alternate modification is found at K161. Residue S166 is modified to Phosphoserine. N6-acetyllysine; alternate is present on K167. An N6-succinyllysine; alternate modification is found at K167. Phosphoserine is present on S184. R204 bears the Omega-N-methylarginine mark. Positions 215, 217, 218, 219, and 220 each coordinate ATP. Residue T219 coordinates Mg(2+). N6-acetyllysine; alternate occurs at positions 230 and 239. Residues K230 and K239 each carry the N6-succinyllysine; alternate modification. K240 is subject to N6-acetyllysine. N6-acetyllysine; alternate is present on residues K261 and K305. K261 and K305 each carry N6-succinyllysine; alternate. Mg(2+) is bound at residue D312. Position 427 is an N6-acetyllysine; alternate (K427). K427 bears the N6-succinyllysine; alternate mark. N6-acetyllysine is present on K434. The ATP site is built by Q473 and Q475. An N6-acetyllysine; alternate mark is found at K498, K506, K531, and K539. N6-succinyllysine; alternate is present on residues K498, K506, K531, and K539. At K541 the chain carries N6-acetyllysine.

Belongs to the ATPase alpha/beta chains family. Homotrimer. Component of the ATP synthase complex composed at least of ATP5F1A/subunit alpha, ATP5F1B/subunit beta, ATP5MC1/subunit c (homooctomer), MT-ATP6/subunit a, MT-ATP8/subunit 8, ATP5ME/subunit e, ATP5MF/subunit f, ATP5MG/subunit g, ATP5MK/subunit k, ATP5MJ/subunit j, ATP5F1C/subunit gamma, ATP5F1D/subunit delta, ATP5F1E/subunit epsilon, ATP5PF/subunit F6, ATP5PB/subunit b, ATP5PD/subunit d, ATP5PO/subunit OSCP. ATP synthase complex consists of a soluble F(1) head domain (subunits alpha(3) and beta(3)) - the catalytic core - and a membrane F(0) domain - the membrane proton channel (subunits c, a, 8, e, f, g, k and j). These two domains are linked by a central stalk (subunits gamma, delta, and epsilon) rotating inside the F1 region and a stationary peripheral stalk (subunits F6, b, d, and OSCP). Interacts with ATPAF2. Interacts with HRG; the interaction occurs on the surface of T-cells and alters the cell morphology when associated with concanavalin (in vitro). Interacts with PLG (angiostatin peptide); the interaction inhibits most of the angiogenic properties of angiostatin. Interacts with BLOC1S1. Interacts with BCL2L1 isoform BCL-X(L); the interaction mediates the association of BCL2L1 isoform BCL-X(L) with the mitochondrial membrane F(1)F(0) ATP synthase and enhances neurons metabolic efficiency. Interacts with CLN5 and PPT1. Interacts with S100A1; this interaction increases F1-ATPase activity. Interacts with ABCB7; this interaction allows the regulation of cellular iron homeostasis and cellular reactive oxygen species (ROS) levels in cardiomyocytes. In terms of processing, acetylated on lysine residues. BLOC1S1 is required for acetylation. In terms of tissue distribution, expressed in heart (at protein level).

The protein localises to the mitochondrion. The protein resides in the mitochondrion inner membrane. It localises to the cell membrane. Subunit alpha, of the mitochondrial membrane ATP synthase complex (F(1)F(0) ATP synthase or Complex V) that produces ATP from ADP in the presence of a proton gradient across the membrane which is generated by electron transport complexes of the respiratory chain. ATP synthase complex consist of a soluble F(1) head domain - the catalytic core - and a membrane F(1) domain - the membrane proton channel. These two domains are linked by a central stalk rotating inside the F(1) region and a stationary peripheral stalk. During catalysis, ATP synthesis in the catalytic domain of F(1) is coupled via a rotary mechanism of the central stalk subunits to proton translocation. In vivo, can only synthesize ATP although its ATP hydrolase activity can be activated artificially in vitro. With the catalytic subunit beta (ATP5F1B), forms the catalytic core in the F(1) domain. Subunit alpha does not bear the catalytic high-affinity ATP-binding sites. This chain is ATP synthase F(1) complex subunit alpha, mitochondrial, found in Sus scrofa (Pig).